Reading from the N-terminus, the 1173-residue chain is SMC5-SMC6 complex localization factor protein 2 (1173 aa).

Residues 1 to 109 are disordered; the sequence is MTRRCMPARP…KPKRVPPEKS (109 aa). Basic and acidic residues-rich tracts occupy residues 39–50 and 88–106; these read KRTESPGDRKQS and QFER…RVPP. An APIM motif motif is present at residues 137 to 149; sequence SLASKYLAKGTNI. Disordered regions lie at residues 161 to 230, 256 to 275, 280 to 373, 394 to 620, and 635 to 663; these read MKSL…PEES, QMEQ…SLSL, ERKY…QKEK, KEPS…EEET, and TPAA…VHPG. The span at 181–199 shows a compositional bias: basic and acidic residues; the sequence is ENNEKNDRDRGKTNADSKK. Low complexity-rich tracts occupy residues 212-221 and 262-275; these read SSRSLSSRSS and NSEN…SLSL. A compositionally biased stretch (basic and acidic residues) spans 280-293; it reads ERKYKPRQEQRKQN. Polar residues predominate over residues 317-330; that stretch reads SDSWEPTSAGSKQN. 2 stretches are compositionally biased toward basic and acidic residues: residues 339–349 and 355–373; these read NSVDSDLKSTR and KARE…QKEK. Over residues 409 to 428 the composition is skewed to polar residues; that stretch reads PSNSGNSGHHSTRNSDQIQV. Residue Ser481 is modified to Phosphoserine. The span at 499–520 shows a compositional bias: basic and acidic residues; sequence SKKDKERSSSKECSGHSTESTK. Residues 571–592 are compositionally biased toward low complexity; the sequence is APSDKAPSEGESSGNSNAGSSA. Acidic residues predominate over residues 602–619; sequence DSDEESLGYNLDSDEEEE. Phosphoserine is present on residues Ser603, Ser607, and Ser614. Residues 635–1173 form an interaction with SIMC1 region; it reads TPAATGKPPA…QLHDFWVPDS (539 aa). The NSE6-like domain stretch occupies residues 664–1166; sequence TYTNTLERLV…NCRPTQGQLH (503 aa). The required for interaction with SLF1 and RAD18 stretch occupies residues 702-1173; it reads PIRIGEEDST…QLHDFWVPDS (472 aa).

This sequence belongs to the FAM178 family. In terms of assembly, forms a heterodimer with SIMC1. Interacts with SLF1 (via N-terminus); this interaction links RAD18 to the SMC5-SMC6 complex. Interacts with RAD18; this interaction is increased in a SLF1-dependent manner. Interacts with SMC5 and SMC6. Widely expressed. Expressed at higher level in skeletal muscle and at slightly lower level in brain, liver and heart, than in lung, kidney, spleen and thymus.

The protein resides in the nucleus. The protein localises to the PML body. In terms of biological role, plays a role in the DNA damage response (DDR) pathway by regulating postreplication repair of UV-damaged DNA and genomic stability maintenance. The SLF1-SLF2 complex acts to link RAD18 with the SMC5-SMC6 complex at replication-coupled interstrand cross-links (ICL) and DNA double-strand breaks (DSBs) sites on chromatin during DNA repair in response to stalled replication forks. Promotes the recruitment of the SMC5-SMC6 complex to DNA lesions. Plays a role in SMC5-SMC6 complex recruitment for viral restriction. Forms a complex with SIMC1 and this complex is required to recruit SMC5-SMC6 complex to PML nuclear bodies and sites of viral replication. In Homo sapiens (Human), this protein is SMC5-SMC6 complex localization factor protein 2.